The chain runs to 172 residues: Nascent polypeptide-associated complex subunit beta (172 aa).

2 disordered regions span residues 36–58 (KTGKGTPRRKMKRAPARSGGDDK) and 142–172 (QNMQKADGDKEADDDDIPDLVAGENFEDKVE). Over residues 41-50 (TPRRKMKRAP) the composition is skewed to basic residues. One can recognise an NAC-A/B domain in the interval 54 to 119 (GGDDKKLQQT…GEDKELTELV (66 aa)).

It belongs to the NAC-beta family. Part of the nascent polypeptide-associated complex (NAC), consisting of EGD2 and EGD1. NAC associates with ribosomes via EGD1.

The protein localises to the cytoplasm. The protein resides in the nucleus. In terms of biological role, component of the nascent polypeptide-associated complex (NAC), a dynamic component of the ribosomal exit tunnel, protecting the emerging polypeptides from interaction with other cytoplasmic proteins to ensure appropriate nascent protein targeting. The NAC complex also promotes mitochondrial protein import by enhancing productive ribosome interactions with the outer mitochondrial membrane and blocks the inappropriate interaction of ribosomes translating non-secretory nascent polypeptides with translocation sites in the membrane of the endoplasmic reticulum. EGD1 may act as a transcription factor that exert a negative effect on the expression of several genes that are transcribed by RNA polymerase II. This chain is Nascent polypeptide-associated complex subunit beta (EGD1), found in Pyricularia oryzae (strain 70-15 / ATCC MYA-4617 / FGSC 8958) (Rice blast fungus).